A 475-amino-acid chain; its full sequence is ATP synthase subunit beta, chloroplastic (475 aa).

156–163 (GGAGVGKT) is a binding site for ATP.

It belongs to the ATPase alpha/beta chains family. As to quaternary structure, F-type ATPases have 2 components, CF(1) - the catalytic core - and CF(0) - the membrane proton channel. CF(1) has five subunits: alpha(3), beta(3), gamma(1), delta(1), epsilon(1). CF(0) has four main subunits: a(1), b(1), b'(1) and c(9-12).

It localises to the plastid. It is found in the chloroplast thylakoid membrane. The enzyme catalyses ATP + H2O + 4 H(+)(in) = ADP + phosphate + 5 H(+)(out). Functionally, produces ATP from ADP in the presence of a proton gradient across the membrane. The catalytic sites are hosted primarily by the beta subunits. The protein is ATP synthase subunit beta, chloroplastic of Gracilaria tenuistipitata var. liui (Red alga).